An 89-amino-acid chain; its full sequence is Small ribosomal subunit protein uS15 (89 aa).

This sequence belongs to the universal ribosomal protein uS15 family. In terms of assembly, part of the 30S ribosomal subunit. Forms a bridge to the 50S subunit in the 70S ribosome, contacting the 23S rRNA.

Functionally, one of the primary rRNA binding proteins, it binds directly to 16S rRNA where it helps nucleate assembly of the platform of the 30S subunit by binding and bridging several RNA helices of the 16S rRNA. Its function is as follows. Forms an intersubunit bridge (bridge B4) with the 23S rRNA of the 50S subunit in the ribosome. The chain is Small ribosomal subunit protein uS15 from Shewanella baltica (strain OS185).